A 680-amino-acid chain; its full sequence is Putative E3 ubiquitin-protein ligase UNKL (680 aa).

Residues 1 to 22 form a disordered region; sequence MPSVSKAAAAALSGSPPQTEKP. C3H1-type zinc fingers lie at residues 75–104, 115–145, 243–277, and 283–310; these read YSPD…HRTT, YYKT…HGPL, QYRS…HSRT, and PEST…HVEK. Low complexity-rich tracts occupy residues 326–337, 375–396, 465–497, and 545–562; these read TSPSSTGSGQPG, VSSS…SPTA, SLPR…VGSS, and SPSP…SASP. 4 disordered regions span residues 326-358, 375-400, 442-520, and 545-566; these read TSPS…QDSK, VSSS…LPAP, DGHD…SAAS, and SPSP…NGAE. The stretch at 563–619 forms a coiled coil; that stretch reads NGAELARVRRQLDEAKRKIRQWEESWQQVKQVCDAWQREAQEAKERARVADSDRQLA. Residues 639–674 form an RING-type zinc finger; the sequence is CVACRERAHGAVLRPCQHHILCEPCAATAPECPYCK.

This sequence belongs to the unkempt family. As to quaternary structure, isoform 4 (C-terminal) interacts with the GTP-bound form of RAC1. Isoform 4 (C-terminal) interacts with SMARCD2/BAF60b. Isoform 4 is ubiquitinated in the C-terminal. Ubiquitination is enhanced by activated RAC1. The presence of the RING finger domain is not essential for ubiquitination to occur.

The protein resides in the cytoplasm. Its subcellular location is the nucleus. Its pathway is protein modification; protein ubiquitination. May participate in a protein complex showing an E3 ligase activity regulated by RAC1. Ubiquitination is directed towards itself and possibly other substrates, such as SMARCD2/BAF60b. Intrinsic E3 ligase activity has not been proven. In Homo sapiens (Human), this protein is Putative E3 ubiquitin-protein ligase UNKL (UNKL).